We begin with the raw amino-acid sequence, 447 residues long: Phosphoglucosamine mutase (447 aa).

Ser-100 (phosphoserine intermediate) is an active-site residue. Residues Ser-100, Asp-239, Asp-241, and Asp-243 each contribute to the Mg(2+) site. Ser-100 is modified (phosphoserine).

Belongs to the phosphohexose mutase family. It depends on Mg(2+) as a cofactor. Activated by phosphorylation.

It carries out the reaction alpha-D-glucosamine 1-phosphate = D-glucosamine 6-phosphate. In terms of biological role, catalyzes the conversion of glucosamine-6-phosphate to glucosamine-1-phosphate. This is Phosphoglucosamine mutase from Dictyoglomus turgidum (strain DSM 6724 / Z-1310).